The following is a 984-amino-acid chain: Respiratory nitrate reductase subunit alpha (984 aa).

The segment at 1–43 (MSRNDASQLDDGETTAESPPDDQANDAPEVGDPPGDPVDADSG) is disordered. Residues 8-24 (QLDDGETTAESPPDDQA) show a composition bias toward acidic residues. One can recognise a 4Fe-4S Mo/W bis-MGD-type domain in the interval 103-167 (DSVSRSTHSV…CYTDYVNADQ (65 aa)). [4Fe-4S] cluster-binding residues include His110, Cys114, Cys118, and Cys153. Asp249 lines the Mo-bis(molybdopterin guanine dinucleotide) pocket.

The protein belongs to the prokaryotic molybdopterin-containing oxidoreductase family. In terms of assembly, probable multiprotein complex; a catalytic heterodimer of an alpha and beta chain is proposed to associate with additional subunits involved in membrane attachment and electron transfer. Requires [4Fe-4S] cluster as cofactor. The cofactor is Mo-bis(molybdopterin guanine dinucleotide). Post-translationally, exported by the Tat system.

Its subcellular location is the cell membrane. It catalyses the reaction nitrate + a quinol = a quinone + nitrite + H2O. Its activity is regulated as follows. Inhibited by cyanide, azide and antimycin A. Enzyme stability is not dependent on salt concentration. Functionally, the respiratory membrane-bound nitrate reductase enzyme complex plays a role in generation of metabolic energy by using nitrate as a terminal electron acceptor during anaerobic conditions. The alpha chain is the actual site of nitrate reduction. The protein is Respiratory nitrate reductase subunit alpha (narG) of Haloferax mediterranei (strain ATCC 33500 / DSM 1411 / JCM 8866 / NBRC 14739 / NCIMB 2177 / R-4) (Halobacterium mediterranei).